Reading from the N-terminus, the 461-residue chain is Chromosomal replication initiator protein DnaA (461 aa).

Residues 1–87 (MAVSLWQQCI…IGSRPSAKPV (87 aa)) form a domain I, interacts with DnaA modulators region. The domain II stretch occupies residues 87-124 (VVQATAAIRPKPAASKAVEKPTFNAPQAEPAITANHRS). A domain III, AAA+ region region spans residues 125–341 (NINPTYQFDN…GALNRVIANA (217 aa)). The ATP site is built by Gly169, Gly171, Lys172, and Thr173. Residues 342 to 461 (NFTGRPITID…YANLIRTLSS (120 aa)) form a domain IV, binds dsDNA region.

The protein belongs to the DnaA family. In terms of assembly, oligomerizes as a right-handed, spiral filament on DNA at oriC.

It localises to the cytoplasm. In terms of biological role, plays an essential role in the initiation and regulation of chromosomal replication. ATP-DnaA binds to the origin of replication (oriC) to initiate formation of the DNA replication initiation complex once per cell cycle. Binds the DnaA box (a 9 base pair repeat at the origin) and separates the double-stranded (ds)DNA. Forms a right-handed helical filament on oriC DNA; dsDNA binds to the exterior of the filament while single-stranded (ss)DNA is stabiized in the filament's interior. The ATP-DnaA-oriC complex binds and stabilizes one strand of the AT-rich DNA unwinding element (DUE), permitting loading of DNA polymerase. After initiation quickly degrades to an ADP-DnaA complex that is not apt for DNA replication. Binds acidic phospholipids. In Shewanella piezotolerans (strain WP3 / JCM 13877), this protein is Chromosomal replication initiator protein DnaA.